Consider the following 760-residue polypeptide: Sphingosine kinase B (760 aa).

The disordered stretch occupies residues 1–108 (MENNNNEPAE…NNNNNEPVTS (108 aa)). Residues 12 to 39 (VQEKGPKLKNDIDLNDQFKDEKEKKEEI) show a composition bias toward basic and acidic residues. The span at 40–106 (SSSSIENKNN…NNNNNNNEPV (67 aa)) shows a compositional bias: low complexity. The 137-residue stretch at 247–383 (PKNRKIRILI…LDVCIVQQPT (137 aa)) folds into the DAGKc domain. ATP-binding positions include 257–259 (NPK) and Thr-288. A substrate-binding site is contributed by 313 to 316 (SGDG). Catalysis depends on Asp-315, which acts as the Proton donor/acceptor. ATP is bound by residues Glu-320 and 345-347 (GTG). The interval 394–438 (TVTTTTTTTSPTSASPTITSANNNNNNNNNNNNNNNNNNNNNNNN) is disordered. Asp-461 provides a ligand contact to substrate. Residues Arg-468 and Arg-474 each coordinate ATP. Positions 535–605 (DNDNNNKNKN…SSPRSDINMS (71 aa)) are disordered. The span at 549–597 (EINSTTSNNNNNNNTTTTSTSSSTSTSTSTSSLTATTTTAKSTNSLSSS) shows a compositional bias: low complexity. Residue 734–736 (DGE) coordinates ATP.

It carries out the reaction a sphingoid base + ATP = a sphingoid 1-phosphate + ADP + H(+). With respect to regulation, inhibited by N,N,-dimethylsphingosine. Functionally, catalyzes the phosphorylation of sphingosine to form sphingosine-1-phosphate (S1P), which probably acts intracellularly as a second messenger perhaps by promoting cell proliferation. This is Sphingosine kinase B (sgkB) from Dictyostelium discoideum (Social amoeba).